We begin with the raw amino-acid sequence, 325 residues long: Glutarate 2-hydroxylase (325 aa).

Fe cation contacts are provided by histidine 160, aspartate 162, and histidine 292.

It belongs to the glutarate hydroxylase family. As to quaternary structure, homotetramer. It depends on Fe(2+) as a cofactor.

It carries out the reaction glutarate + 2-oxoglutarate + O2 = (S)-2-hydroxyglutarate + succinate + CO2. The protein operates within amino-acid degradation. Functionally, acts as an alpha-ketoglutarate-dependent dioxygenase catalyzing hydroxylation of glutarate (GA) to L-2-hydroxyglutarate (L2HG). Functions in a L-lysine degradation pathway that proceeds via cadaverine, glutarate and L-2-hydroxyglutarate. In Escherichia coli O157:H7, this protein is Glutarate 2-hydroxylase.